We begin with the raw amino-acid sequence, 322 residues long: Arginase (322 aa).

Mn(2+) is bound by residues histidine 113, aspartate 141, histidine 143, and aspartate 145. Substrate is bound by residues 143 to 147 (HADIN), 154 to 156 (SGN), and aspartate 200. Mn(2+) is bound by residues aspartate 247 and aspartate 249. Positions 261 and 292 each coordinate substrate.

Belongs to the arginase family. As to quaternary structure, homotrimer. It depends on Mn(2+) as a cofactor.

The catalysed reaction is L-arginine + H2O = urea + L-ornithine. It functions in the pathway nitrogen metabolism; urea cycle; L-ornithine and urea from L-arginine: step 1/1. The protein is Arginase (ARG) of Coccidioides posadasii (strain C735) (Valley fever fungus).